Here is a 405-residue protein sequence, read N- to C-terminus: Replication factor C large subunit (405 aa).

G47–T54 provides a ligand contact to ATP.

It belongs to the activator 1 small subunits family. RfcL subfamily. As to quaternary structure, heteromultimer composed of small subunits (RfcS) and large subunits (RfcL).

Part of the RFC clamp loader complex which loads the PCNA sliding clamp onto DNA. The protein is Replication factor C large subunit of Saccharolobus islandicus (strain Y.N.15.51 / Yellowstone #2) (Sulfolobus islandicus).